Here is a 189-residue protein sequence, read N- to C-terminus: Large ribosomal subunit protein bL9 (189 aa).

It belongs to the bacterial ribosomal protein bL9 family.

In terms of biological role, binds to the 23S rRNA. The polypeptide is Large ribosomal subunit protein bL9 (Brucella abortus (strain S19)).